Reading from the N-terminus, the 40-residue chain is Amyloid-beta precursor protein (40 aa).

It belongs to the APP family. As to quaternary structure, binds, via its C-terminus, to the PID domain of several cytoplasmic proteins, including APBB family members, the APBA family, MAPK8IP1, SHC1 and NUMB and DAB1. Binding to DAB1 inhibits its serine phosphorylation. Interacts (via NPXY motif) with DAB2 (via PID domain); the interaction is impaired by tyrosine phosphorylation of the NPXY motif. Also interacts with GPCR-like protein BPP, APPBP1, IB1, KNS2 (via its TPR domains), APPBP2 (via BaSS) and DDB1. In vitro, it binds MAPT via the MT-binding domains. Associates with microtubules in the presence of ATP and in a kinesin-dependent manner. Interacts, through a C-terminal domain, with GNAO1. Interacts with CPEB1, ANKS1B and AGER. Interacts with ITM2B. Interacts with ITM2C. Interacts with IDE. Can form homodimers; dimerization is enhanced in the presence of Cu(2+) ions. Can form homodimers; this is promoted by heparin binding. Interacts with SORL1 (via N-terminal ectodomain); this interaction retains APP in the trans-Golgi network and reduces processing into soluble APP-alpha and amyloid-beta peptides. Interacts with PLD3. Interacts with VDAC1. Interacts with NSG1; could regulate APP processing. Interacts with LRRK2. Interacts (via cytoplasmic domain) with KIF5B. Interacts (via C-terminus) with APBB2/FE65L1 (via C-terminus). Interacts (via intracellular domain) with APBB3. Post-translationally, proteolytically processed under normal cellular conditions. Cleavage either by alpha-secretase, beta-secretase or theta-secretase leads to generation and extracellular release of soluble APP peptides, S-APP-alpha and S-APP-beta, and the retention of corresponding membrane-anchored C-terminal fragments, C80, C83 and C99. Subsequent processing of C80 and C83 by gamma-secretase yields P3 peptides. This is the major secretory pathway and is non-amyloidogenic. Alternatively, presenilin/nicastrin-mediated gamma-secretase processing of C99 releases the amyloid-beta proteins, amyloid-beta protein 40 and amyloid-beta protein 42, major components of amyloid plaques, and the cytotoxic C-terminal fragments, gamma-CTF(50), gamma-CTF(57) and gamma-CTF(59). PSEN1 cleavage is more efficient with C83 than with C99 as substrate (in vitro). Amyloid-beta protein 40 and Amyloid-beta protein 42 are cleaved by ACE. Many other minor amyloid-beta peptides, amyloid-beta 1-X peptides, are found in cerebral spinal fluid (CSF) including the amyloid-beta X-15 peptides, produced from the cleavage by alpha-secretase.

It is found in the cell membrane. Its subcellular location is the membrane. The protein localises to the perikaryon. The protein resides in the cell projection. It localises to the growth cone. It is found in the clathrin-coated pit. Its subcellular location is the early endosome. The protein localises to the cytoplasmic vesicle. Functions as a cell surface receptor and performs physiological functions on the surface of neurons relevant to neurite growth, neuronal adhesion and axonogenesis. Interaction between APP molecules on neighboring cells promotes synaptogenesis. Involved in cell mobility and transcription regulation through protein-protein interactions. Can promote transcription activation through binding to APBB1-KAT5 and inhibit Notch signaling through interaction with Numb. Couples to apoptosis-inducing pathways such as those mediated by G(o) and JIP. Inhibits G(o)-alpha ATPase activity. Acts as a kinesin I membrane receptor, mediating the axonal transport of beta-secretase and presenilin 1. May be involved in copper homeostasis/oxidative stress through copper ion reduction. In vitro, copper-metallated APP induces neuronal death directly or is potentiated through Cu(2+)-mediated low-density lipoprotein oxidation. Can regulate neurite outgrowth through binding to components of the extracellular matrix such as heparin and collagen I and IV. Induces a AGER-dependent pathway that involves activation of p38 MAPK, resulting in internalization of amyloid-beta peptide and mitochondrial dysfunction in cultured cortical neurons. Provides Cu(2+) ions for GPC1 which are required for release of nitric oxide (NO) and subsequent degradation of the heparan sulfate chains on GPC1. This chain is Amyloid-beta precursor protein, found in Felis catus (Cat).